The sequence spans 1257 residues: MPLTGIFFNVNGKDVNEENVDPELTLAYYLRNKLGLRGTKLGCEEGVCGSCTVVLGTWDDCQNKAVYRAVNACLVPLFHVHKTFVITVEGVGSRDKIHPIQDRMARGHALQCGFCSPGFVMSAYALFSNQPNPTIQQINAAIRANLCRCTGYRPILEALYSFSSESGGCCGGNKTGGGCCKDKSSSDEDGGYDEKLLSFNDFPKYDPTQEIIFPPSLRVFSDSETPVTLKGDRIELLLPKNIDQFKKFKKDRTVISSGLITRFVSTRNPKEFSQKWISTKYVKEFNEITVNKDSVVVGAALNIQKMADTLTSSLSINIGKEIDSFIQKFSSPQIANFATWTGAIISGAKSSLSVSDLLILFNVLDAKLTLLNNSGELTQVAIEEFAEKKLFATHTIVNAIFSRSLTGFLFCLKLGETSEQDSTNFNFAALVGNQVSRIFVGLGGQPKRLTSLEVHIDALKGLSVSDLCQTTEMSDYKNVKIALTRFSDFMNHKEKTEEIEGINYLQYFKPKTNESAGRPIANYFNERAITGEAFYVNDIQAYNAVHLGFVLSTVPHAEITKIDVSEALQLEGVAGYFGVSDVPGNNTPGLQISNMNFPDDTTIFADKKVESVGQVIGVIAANDVVLARRAAKLVKVEYKELPSLVNFKEAIEAKSLLGDVQHFGKDENLVKESLENSSKVLEGECDIGGQEHYYLETQSSLVIPGEGDELIVNCSTQGTSFTQLMVAETMKIPAHKIIVKTKRLGGGFGGKVNNASWIACMCAIVAKKLNRPTYGFLSRADDLAITGKRHEVHAKYRVGINFDGKIEGIHYQAWLNGGWSKDHSEGVTMVMGLMVDDVYNMGTIRFDGYPVKTNSNSNTALRGYGNPQSKLINEGVMRRIARDVGKSTEEIKRINFALEGGRRYLGGKIHNDALVECWEYCKKWSEFENRQSGIKQFNKNSTAVKRGIAMSSVRFGLPHPGPTGHGIASLLINLDGSVQLSIGGTEMGQGLNQKMLQVCSEALKRPIDTITIVDCSTDKVTNAPETGGSQNADTNGLAVLACCKKIMSRLQPIIDKNDGEWEKSIREAYGAYVPLQCTEYGTVERAKFGVGEMESPYNTTGACAVEMEIDTLTGYNRVIRVDIVMDVGESLNPALDIGQIEGAFIQGYGLVTCEKITFNKTTGQLDQNTAGKYKIPKASDVPKDFRVKLLGINNANGAQVYSSKGIGEPPLMMSCGAVHSSIMNCIDNWRNENGIHEFVDTISPLSAEKIQELCSKK.

The 2Fe-2S ferredoxin-type domain maps to 4–91 (TGIFFNVNGK…KTFVITVEGV (88 aa)). 4 residues coordinate [2Fe-2S] cluster: Cys43, Cys48, Cys51, and Cys73. An FAD-binding PCMH-type domain is found at 229-459 (LKGDRIELLL…TSLEVHIDAL (231 aa)). Glu1208 serves as the catalytic Proton acceptor.

It belongs to the xanthine dehydrogenase family. It depends on [2Fe-2S] cluster as a cofactor. FAD serves as cofactor. Mo-molybdopterin is required as a cofactor.

The enzyme catalyses an aldehyde + O2 + H2O = a carboxylate + H2O2 + H(+). May be involved in the metabolism of 1-methylnicotinamide (MNA). Linked to regulation of longevity through generation of reactive oxygen species, where it probably functions in a pathway downstream of the sirtuin sir-2.1 and the nicotinamide N-methyltransferase anmt-1. In Caenorhabditis elegans, this protein is Probable aldehyde oxidase gad-3.